The sequence spans 86 residues: MKTLCIFLVLVVAVAAFPPFISQHDCPPNKEFGSYGDCPPSCLKNPPNFCTLKLNYGCKCKEGYVLTRYQDYESDCIKPEECPDDS.

A signal peptide spans 1–16 (MKTLCIFLVLVVAVAA). Disulfide bonds link C26–C58, C38–C50, C42–C82, and C60–C76. The 57-residue stretch at 26 to 82 (CPPNKEFGSYGDCPPSCLKNPPNFCTLKLNYGCKCKEGYVLTRYQDYESDCIKPEEC) folds into the TIL domain.

Belongs to the serine protease inhibitor-like (TIL domain-containing) family. Only expressed in fat body.

It localises to the secreted. Serine protease inhibitor that inhibits chymotrypsin (IC(50)=34.13 nM, Ki=49.85 nM), microbial serine proteases (subtilisin A (IC(50)=21.31 nM, Ki=20.51 nM) and proteinase K (IC(50)=52.56 nM, Ki=65.42 nM)), as well as human neutrophil elastase (IC(50)=11.54 nM, Ki=8.74 nM), and porcine pancreatic elastase (IC(50)=19.07 nM, Ki=11.32 nM). In Araneus ventricosus (Orbweaver spider), this protein is Chymotrypsin inhibitor.